The chain runs to 314 residues: Olfactory receptor 51G2 (314 aa).

Over 1–30 (MTLGSLGNSSSSVSATFLLSGIPGLERMHI) the chain is Extracellular. N-linked (GlcNAc...) asparagine glycosylation occurs at Asn-8. A helical membrane pass occupies residues 31–51 (WISIPLCFMYLVSIPGNCTIL). The Cytoplasmic portion of the chain corresponds to 52-59 (FIIKTERS). Residues 60 to 80 (LHEPMYLFLSMLALIDLGLSL) traverse the membrane as a helical segment. At 81 to 104 (CTLPTVLGIFWVGAREISHDACFA) the chain is on the extracellular side. Cys-102 and Cys-194 form a disulfide bridge. Residues 105–125 (QLFFIHCFSFLESSVLLSMAF) form a helical membrane-spanning segment. Residues 126-144 (DRFVAICHPLHYVSILTNT) are Cytoplasmic-facing. Residues 145 to 165 (VIGRIGLVSLGRSVALIFPLP) form a helical membrane-spanning segment. The Extracellular portion of the chain corresponds to 166-201 (FMLKRFPYCGSPVLSHSYCLHQEVMKLACADMKANS). A helical transmembrane segment spans residues 202–222 (IYGMFVIVSTVGIDSLLILFS). At 223 to 242 (YALILRTVLSIASRAERFKA) the chain is on the cytoplasmic side. The helical transmembrane segment at 243 to 263 (LNTCVSHICAVLLFYTPMIGL) threads the bilayer. The Extracellular portion of the chain corresponds to 264 to 278 (SVIHRFGKQAPHLVQ). Residues 279-299 (VVMGFMYLLFPPVMNPIVYSV) traverse the membrane as a helical segment. Residues 300–314 (KTKQIRDRVTHAFCY) are Cytoplasmic-facing.

Belongs to the G-protein coupled receptor 1 family.

Its subcellular location is the cell membrane. Its function is as follows. Odorant receptor. The chain is Olfactory receptor 51G2 (OR51G2) from Homo sapiens (Human).